The chain runs to 1065 residues: Valine--tRNA ligase, mitochondrial (1065 aa).

Residues 1–15 (MPHLPLASFRPPLWG) constitute a mitochondrion transit peptide. Positions 27–52 (ALCTQPEPHGSPVSRRNREAKQKRLR) are disordered. Basic and acidic residues predominate over residues 42–52 (RNREAKQKRLR). A 'HIGH' region motif is present at residues 146-156 (PNVTGSLHIGH). The 'KMSKS' region motif lies at 659–663 (KMSKS). ATP is bound at residue K662.

This sequence belongs to the class-I aminoacyl-tRNA synthetase family.

The protein resides in the mitochondrion. The catalysed reaction is tRNA(Val) + L-valine + ATP = L-valyl-tRNA(Val) + AMP + diphosphate. Catalyzes the attachment of valine to tRNA(Val) in a two-step reaction: valine is first activated by ATP to form Val-AMP and then transferred to the acceptor end of tRNA(Val). This is Valine--tRNA ligase, mitochondrial (Vars2) from Rattus norvegicus (Rat).